A 430-amino-acid polypeptide reads, in one-letter code: Adenylosuccinate synthetase (430 aa).

GTP-binding positions include 12–18 and 40–42; these read GDEGKGK and GHT. The active-site Proton acceptor is the Asp13. Residues Asp13 and Gly40 each coordinate Mg(2+). IMP is bound by residues 13 to 16, 38 to 41, Thr128, Arg142, Gln223, Thr238, and Arg302; these read DEGK and NAGH. The active-site Proton donor is His41. A substrate-binding site is contributed by 298-304; that stretch reads VNTGRTR. Residues Arg304, 330-332, and 412-414 each bind GTP; these read KLD and GVG.

Belongs to the adenylosuccinate synthetase family. In terms of assembly, homodimer. It depends on Mg(2+) as a cofactor.

It is found in the cytoplasm. It carries out the reaction IMP + L-aspartate + GTP = N(6)-(1,2-dicarboxyethyl)-AMP + GDP + phosphate + 2 H(+). It participates in purine metabolism; AMP biosynthesis via de novo pathway; AMP from IMP: step 1/2. Plays an important role in the de novo pathway of purine nucleotide biosynthesis. Catalyzes the first committed step in the biosynthesis of AMP from IMP. The chain is Adenylosuccinate synthetase from Corynebacterium ammoniagenes (Brevibacterium ammoniagenes).